We begin with the raw amino-acid sequence, 421 residues long: Glycosaminoglycan xylosylkinase homolog (421 aa).

The first 21 residues, 1–21 (MNKRSVIIAGIVASLLGLALG), serve as a signal peptide directing secretion. N83 is a glycosylation site (N-linked (GlcNAc...) asparagine). ATP is bound by residues Q131 and K147. A Mn(2+)-binding site is contributed by D166. Disulfide bonds link C225-C240 and C230-C233. Residue 252–255 (IYIV) coordinates ATP. Intrachain disulfides connect C285–C351 and C352–C409. Residue D314 is part of the active site. Positions 319 and 329 each coordinate ATP. Residue D329 coordinates Mn(2+).

This sequence belongs to the FAM20 family. Mn(2+) serves as cofactor.

The protein localises to the golgi apparatus. Its subcellular location is the endoplasmic reticulum. It carries out the reaction 3-O-(beta-D-galactosyl-(1-&gt;3)-beta-D-galactosyl-(1-&gt;4)-beta-D-xylosyl)-L-seryl-[protein] + ATP = 3-O-(beta-D-galactosyl-(1-&gt;3)-beta-D-galactosyl-(1-&gt;4)-beta-D-2-O-phosphoxylosyl)-L-seryl-[protein] + ADP + H(+). Its function is as follows. Kylose kinase that mediates the 2-O-phosphorylation of xylose in the glycosaminoglycan-protein linkage region of proteoglycans. In Drosophila melanogaster (Fruit fly), this protein is Glycosaminoglycan xylosylkinase homolog.